A 192-amino-acid polypeptide reads, in one-letter code: uncharacterized protein (192 aa).

A signal peptide spans 1–17 (MFLHLILLAGLAPVVYL).

This is an uncharacterized protein from Caenorhabditis elegans.